Here is a 374-residue protein sequence, read N- to C-terminus: tRNA-specific 2-thiouridylase MnmA (374 aa).

Residues 12-19 (GMSGGVDS) and methionine 38 contribute to the ATP site. The segment at 98-100 (NPD) is interaction with target base in tRNA. Residue cysteine 103 is the Nucleophile of the active site. Cysteine 103 and cysteine 202 are joined by a disulfide. An ATP-binding site is contributed by glycine 128. Residues 152 to 154 (KDQ) form an interaction with tRNA region. Residue cysteine 202 is the Cysteine persulfide intermediate of the active site. The interval 316–317 (RY) is interaction with tRNA.

This sequence belongs to the MnmA/TRMU family.

It localises to the cytoplasm. The enzyme catalyses S-sulfanyl-L-cysteinyl-[protein] + uridine(34) in tRNA + AH2 + ATP = 2-thiouridine(34) in tRNA + L-cysteinyl-[protein] + A + AMP + diphosphate + H(+). Catalyzes the 2-thiolation of uridine at the wobble position (U34) of tRNA, leading to the formation of s(2)U34. This chain is tRNA-specific 2-thiouridylase MnmA, found in Vibrio vulnificus (strain CMCP6).